Reading from the N-terminus, the 65-residue chain is Large ribosomal subunit protein bL35 (65 aa).

The protein belongs to the bacterial ribosomal protein bL35 family.

The sequence is that of Large ribosomal subunit protein bL35 from Parabacteroides distasonis (strain ATCC 8503 / DSM 20701 / CIP 104284 / JCM 5825 / NCTC 11152).